The following is a 497-amino-acid chain: Meiosis-specific serine/threonine-protein kinase MEK1 (497 aa).

The region spanning 47 to 102 (VKVGRNDKECQLVLTNPSISSVHCVFWCVFFDEDSIPMFYVKDCSLNGTYLNGLLL) is the FHA domain. Positions 162-444 (EITNRIVGNG…SKQGLKHIWI (283 aa)) constitute a Protein kinase domain. Residues 168–176 (VGNGTFGHV) and K199 each bind ATP. Residue D290 is the Proton acceptor of the active site.

Belongs to the protein kinase superfamily. CAMK Ser/Thr protein kinase family. CHEK2 subfamily.

It catalyses the reaction L-seryl-[protein] + ATP = O-phospho-L-seryl-[protein] + ADP + H(+). The enzyme catalyses L-threonyl-[protein] + ATP = O-phospho-L-threonyl-[protein] + ADP + H(+). Functionally, probable protein kinase required for meiotic recombination. This Saccharomyces cerevisiae (strain ATCC 204508 / S288c) (Baker's yeast) protein is Meiosis-specific serine/threonine-protein kinase MEK1 (MEK1).